A 606-amino-acid chain; its full sequence is Aspartate--tRNA(Asp/Asn) ligase (606 aa).

Residue E177 coordinates L-aspartate. The interval 201-204 (QLFK) is aspartate. R223 is a binding site for L-aspartate. Residues 223–225 (RDE) and Q232 contribute to the ATP site. Residue H461 participates in L-aspartate binding. E499 contacts ATP. Residue R506 coordinates L-aspartate. 551-554 (GLDR) provides a ligand contact to ATP.

Belongs to the class-II aminoacyl-tRNA synthetase family. Type 1 subfamily. Homodimer.

The protein resides in the cytoplasm. The enzyme catalyses tRNA(Asx) + L-aspartate + ATP = L-aspartyl-tRNA(Asx) + AMP + diphosphate. Aspartyl-tRNA synthetase with relaxed tRNA specificity since it is able to aspartylate not only its cognate tRNA(Asp) but also tRNA(Asn). Reaction proceeds in two steps: L-aspartate is first activated by ATP to form Asp-AMP and then transferred to the acceptor end of tRNA(Asp/Asn). This Prochlorococcus marinus (strain NATL2A) protein is Aspartate--tRNA(Asp/Asn) ligase.